A 255-amino-acid polypeptide reads, in one-letter code: EEF1A lysine methyltransferase 4 (255 aa).

S-adenosyl-L-methionine is bound by residues tryptophan 26 and tyrosine 30. Position 39 is a phosphotyrosine (tyrosine 39). Residues tryptophan 41, glycine 66, aspartate 88–tyrosine 89, aspartate 113–valine 114, and lysine 130 each bind S-adenosyl-L-methionine. Positions glutamate 129–aspartate 134 match the Required for methyltransferase activity motif.

The protein belongs to the methyltransferase superfamily.

It carries out the reaction L-lysyl-[protein] + S-adenosyl-L-methionine = N(6)-methyl-L-lysyl-[protein] + S-adenosyl-L-homocysteine + H(+). The catalysed reaction is N(6)-methyl-L-lysyl-[protein] + S-adenosyl-L-methionine = N(6),N(6)-dimethyl-L-lysyl-[protein] + S-adenosyl-L-homocysteine + H(+). The enzyme catalyses N(6),N(6)-dimethyl-L-lysyl-[protein] + S-adenosyl-L-methionine = N(6),N(6),N(6)-trimethyl-L-lysyl-[protein] + S-adenosyl-L-homocysteine + H(+). In terms of biological role, protein-lysine methyltransferase that efficiently catalyzes three successive methylations on 'Lys-36' in eukaryotic translation elongation factor 1 alpha (EEF1A1 or EEF1A2). The sequence is that of EEF1A lysine methyltransferase 4 from Homo sapiens (Human).